The chain runs to 284 residues: Tropomyosin (284 aa).

Residues 1 to 284 (MDAIKKKMQA…DQTFQELFGY (284 aa)) are a coiled coil. Basic and acidic residues predominate over residues 113–142 (LEKATHTADESDRVRKVMENRSFQDEERAN). The interval 113-143 (LEKATHTADESDRVRKVMENRSFQDEERANT) is disordered.

It belongs to the tropomyosin family.

Its function is as follows. Tropomyosin, in association with the troponin complex, plays a central role in the calcium dependent regulation of muscle contraction. The chain is Tropomyosin from Acanthocheilonema viteae (Filarial nematode worm).